A 503-amino-acid chain; its full sequence is D-xylose-proton symporter-like 1 (503 aa).

Positions 1-23 (MGFDPENQSISSVGQVVGDSSSG) are disordered. A compositionally biased stretch (low complexity) spans 8–23 (QSISSVGQVVGDSSSG). 12 helical membrane passes run 51-73 (FLFP…CAIM), 95-115 (IITS…FSVA), 129-149 (FLYL…ILII), 152-172 (VTYG…IAET), 190-210 (VLGM…ISGW), 213-233 (MYAT…WLPA), 305-325 (ALTI…PSVL), 346-366 (ISIL…IVID), 374-394 (LLCG…YYMF), 405-425 (ALLL…WLMI), 437-457 (GISL…FAFS), and 467-487 (ILFC…YYIV).

The protein belongs to the major facilitator superfamily. Sugar transporter (TC 2.A.1.1) family.

It is found in the membrane. This is D-xylose-proton symporter-like 1 from Arabidopsis thaliana (Mouse-ear cress).